The primary structure comprises 409 residues: Cdc42 effector protein 1 (409 aa).

The interval 1–29 (MPGPQGGTGAPTMSLGKLSPVGWVSSSHG) is disordered. 2 positions are modified to phosphoserine: serine 19 and serine 27. Threonine 34 bears the Phosphothreonine mark. The CRIB domain occupies 38 to 52 (ISPPLGDFRHTMHVG). Serine 39 is modified (phosphoserine). Arginine 53 is modified (omega-N-methylarginine). Phosphoserine is present on residues serine 65, serine 77, serine 101, serine 113, serine 121, and serine 139. Residues 167-189 (PRVEKHSNRDRDRDPDHSQDREQ) are compositionally biased toward basic and acidic residues. Residues 167–203 (PRVEKHSNRDRDRDPDHSQDREQSSFPSEPTPNPELR) are disordered. Phosphoserine is present on residues serine 191, serine 205, serine 207, and serine 210. Tandem repeats lie at residues 235-241 (PAAETPV), 242-248 (PTANPPA), and 255-261 (PTAKPPA). Residues 235-284 (PAAETPVPTANPPAPAANPAPTAKPPAHAITTLDAVTSLPASAVTSLPAP) are 3 X 7 AA tandem repeats of [PT]-[AT]-A-[ENT]-[PT]-[PTS]-[AG]. Disordered regions lie at residues 237-260 (AETP…AKPP) and 282-329 (PAPA…FDRH). Residues 243-258 (TANPPAPAANPAPTAK) show a composition bias toward pro residues. Residues 282–291 (PAPAAASSPS) show a composition bias toward low complexity. Residues serine 312, serine 332, serine 368, and serine 371 each carry the phosphoserine modification.

This sequence belongs to the BORG/CEP family. As to quaternary structure, interacts with RHOQ and CDC42, in a GTP-dependent manner.

It localises to the endomembrane system. It is found in the cytoplasm. The protein localises to the cytoskeleton. Functionally, probably involved in the organization of the actin cytoskeleton. Induced membrane extensions in fibroblasts. The protein is Cdc42 effector protein 1 (Cdc42ep1) of Mus musculus (Mouse).